The primary structure comprises 203 residues: A-type ATP synthase subunit E (203 aa).

Belongs to the V-ATPase E subunit family. As to quaternary structure, has multiple subunits with at least A(3), B(3), C, D, E, F, H, I and proteolipid K(x).

It is found in the cell membrane. Its function is as follows. Component of the A-type ATP synthase that produces ATP from ADP in the presence of a proton gradient across the membrane. This chain is A-type ATP synthase subunit E, found in Thermococcus onnurineus (strain NA1).